The following is a 691-amino-acid chain: Menaquinone reductase, molybdopterin-binding-like subunit (691 aa).

Residues Met1–Lys27 constitute a signal peptide (tat-type signal). In terms of domain architecture, 4Fe-4S Mo/W bis-MGD-type spans Asn50–Ala106.

This sequence belongs to the prokaryotic molybdopterin-containing oxidoreductase family. In terms of assembly, the Qrc complex is composed of four subunits: QrcA, QrcB, QrcC and QrcD. Can form a supercomplex with the [NiFe] hydrogenase HynA1 and the tetraheme Type I cytochrome c3 TpIc(3), its physiological electron donors. Requires There is no molybdenum or tungsten pterin cofactor present in the Qrc complex, despite the similarity of QrcB to molybdopterin-containing oxidoreductases. as cofactor. In terms of processing, predicted to be exported by the Tat system. The position of the signal peptide cleavage has not been experimentally proven.

Its subcellular location is the periplasm. Component of the respiratory Qrc complex, that catalyzes the reduction of the menaquinone pool using electrons transferred from the reduced periplasmic cytochrome c3, and which is probably involved in sulfate respiration. Is likely essential for growth on H(2) or formate since the periplasmic hydrogenases and/or formate dehydrogenases act as primary electron donors for the Qrc complex. The function of the QrcB subunit is unknown; in the absence of a catalytic site, it may provide a structural scaffold for the other subunits. The chain is Menaquinone reductase, molybdopterin-binding-like subunit from Nitratidesulfovibrio vulgaris (strain ATCC 29579 / DSM 644 / CCUG 34227 / NCIMB 8303 / VKM B-1760 / Hildenborough) (Desulfovibrio vulgaris).